The following is a 307-amino-acid chain: MEDEEGIGLILARATELRLKISDCIDNSSTTVSDNGDGNEDLSPGEGRKSEIIGNQDKDFDSISSEDVDEAEAERLLRIRDALEALESQLASLQNLRQRQQYEKQLALSEIDYSRKMLLEKLKEYKGKDFEVLRETTTFAGERVDYENDLLLPPYPVHPPLSLGLDNNNGYLSHLPSKKKSDANGFGSGHVRNEAEAKSPNGGSGGSSHGVIRFLGSVAKIVLPIIGVISLLSASGYGPEMRKRGASLNLFGLLPHRATRGKRTPNQCPPGKVLVIEDGEARCLVKERVEIPFDSVVAKRDVTYGYG.

Residue methionine 1 is modified to N-acetylmethionine. At 1–213 (MEDEEGIGLI…SGGSSHGVIR (213 aa)) the chain is on the cytoplasmic side. The tract at residues 28 to 66 (SSTTVSDNGDGNEDLSPGEGRKSEIIGNQDKDFDSISSE) is disordered. The segment covering 46–61 (EGRKSEIIGNQDKDFD) has biased composition (basic and acidic residues). Serine 50 bears the Phosphoserine mark. Residues 76 to 103 (LLRIRDALEALESQLASLQNLRQRQQYE) are a coiled coil. Residues 174–206 (HLPSKKKSDANGFGSGHVRNEAEAKSPNGGSGG) form a disordered region. The chain crosses the membrane as a helical span at residues 214-234 (FLGSVAKIVLPIIGVISLLSA). The Chloroplast intermembrane portion of the chain corresponds to 235-307 (SGYGPEMRKR…AKRDVTYGYG (73 aa)). Residues 235 to 307 (SGYGPEMRKR…AKRDVTYGYG (73 aa)) form an ARC6 binding region.

In terms of assembly, interacts (via C-terminus) with ARC6 (via C-terminus) in the chloroplast intermembrane space; this interaction induces ARC6 homodimerization and leads to the formation of a heterotetramer containing two ARC6 and two PDV2 subunits. Interacts with ARC5/DRP5B. Mostly expressed in young leaves.

It localises to the plastid. It is found in the chloroplast outer membrane. Component of the plastid division machinery consisting in a binary fission accomplished by the simultaneous constriction of the FtsZ ring on the stromal side of the inner envelope membrane, and the ARC5/DRP5B ring on the cytosolic side of the outer envelope membrane. Positive factor of chloroplast division required, with a dosage effect, to mediate the recruitment and dimerization of ARC5/DRP5B at the midplastid constriction site in the cytoplasm at plastid outer envelope membranes (OEMs). Prevents ARC5/DRP5B GTPase acrivity. Relays plastid division site position between stroma and outer surface via interactions with the cytoplasmic ARC5/DRP5B and the inner membrane ARC6 that recruits stromal FtsZ ring. Binding to phosphatidylinositol 4-phosphate (PI4P) modulates negatively chloroplast division. The chain is Plastid division protein PDV2 from Arabidopsis thaliana (Mouse-ear cress).